Consider the following 449-residue polypeptide: Mitochondrial distribution and morphology protein 10 (449 aa).

2 disordered regions span residues 215-244 (GPSE…DEED) and 282-307 (DATP…GAPS). Residues 285-301 (PPSFQLPSSSPTQPSLL) show a composition bias toward low complexity.

It belongs to the MDM10 family. In terms of assembly, component of the ER-mitochondria encounter structure (ERMES) or MDM complex, composed of MMM1, MDM10, MDM12 and MDM34. Associates with the mitochondrial outer membrane sorting assembly machinery SAM(core) complex.

It localises to the mitochondrion outer membrane. Functionally, component of the ERMES/MDM complex, which serves as a molecular tether to connect the endoplasmic reticulum and mitochondria. Components of this complex are involved in the control of mitochondrial shape and protein biogenesis and may function in phospholipid exchange. MDM10 is involved in the late assembly steps of the general translocase of the mitochondrial outer membrane (TOM complex). Functions in the TOM40-specific route of the assembly of outer membrane beta-barrel proteins, including the association of TOM40 with the receptor TOM22 and small TOM proteins. Can associate with the SAM(core) complex as well as the MDM12-MMM1 complex, both involved in late steps of the major beta-barrel assembly pathway, that is responsible for biogenesis of all outer membrane beta-barrel proteins. May act as a switch that shuttles between both complexes and channels precursor proteins into the TOM40-specific pathway. Plays a role in mitochondrial morphology and in the inheritance of mitochondria. The protein is Mitochondrial distribution and morphology protein 10 of Postia placenta (strain ATCC 44394 / Madison 698-R) (Brown rot fungus).